Here is an 824-residue protein sequence, read N- to C-terminus: Leucine--tRNA ligase (824 aa).

A 'HIGH' region motif is present at residues 42–52 (PYPSGHLHMGH). The 'KMSKS' region motif lies at 581–585 (KMSKS). Position 584 (K584) interacts with ATP.

This sequence belongs to the class-I aminoacyl-tRNA synthetase family.

It localises to the cytoplasm. The enzyme catalyses tRNA(Leu) + L-leucine + ATP = L-leucyl-tRNA(Leu) + AMP + diphosphate. This is Leucine--tRNA ligase from Syntrophomonas wolfei subsp. wolfei (strain DSM 2245B / Goettingen).